The chain runs to 288 residues: uncharacterized protein (288 aa).

One can recognise an HTH rpiR-type domain in the interval 5-81 (GNVLNKIGSL…LELSIELATK (77 aa)). The H-T-H motif DNA-binding region spans 41–60 (LSEIAKHLQVGEATLVRFCR). An SIS domain is found at 129 to 269 (VVKVLKKARR…YALLVQGEED (141 aa)).

This is an uncharacterized protein from Haemophilus influenzae (strain ATCC 51907 / DSM 11121 / KW20 / Rd).